Here is a 1151-residue protein sequence, read N- to C-terminus: ATP-dependent RNA helicase ddx46 (1151 aa).

Composition is skewed to basic and acidic residues over residues 1-26 and 35-51; these read MDEY…DNRN and YRDD…DRSH. 4 disordered regions span residues 1 to 138, 166 to 224, 287 to 358, and 424 to 449; these read MDEY…SRFD, MYQQ…VFQQ, QELK…PLVN, and TSQM…DKTI. Positions 52-73 are enriched in low complexity; it reads YNNNNNNNNNNNNNNNNNNGNG. The span at 81-90 shows a compositional bias: polar residues; sequence SSQNKYQNHH. Composition is skewed to low complexity over residues 91-124, 166-199, 207-224, and 291-339; these read QQSP…QPHI, MYQQ…FQHH, QPPV…VFQQ, and ASGS…TTSP. Positions 428–443 are enriched in acidic residues; it reads IDDDEKLEEESEGEDD. Positions 509-537 match the Q motif motif; the sequence is QSWAQAGLTEKVHLLLKKFQYEKPTSIQA. In terms of domain architecture, Helicase ATP-binding spans 540–718; the sequence is IPAIMNGRDL…KKILNKPLEI (179 aa). Residue 553 to 560 coordinates ATP; sequence ARTGSGKT. The DEAD box signature appears at 666–669; sequence DEAD. Positions 729 to 890 constitute a Helicase C-terminal domain; that stretch reads DIEQFVEVRP…KVPDELRKLN (162 aa). The interval 904–972 is disordered; it reads LLAPTGFTGR…EKEKQLLSEK (69 aa). The segment covering 915 to 930 has biased composition (basic and acidic residues); sequence HKFDAAEEDKKNIERK. Residues 938-948 are compositionally biased toward acidic residues; that stretch reads IEEEEEEEDED. The segment covering 949–972 has biased composition (basic and acidic residues); sequence KEKAEKEKLAAASAEKEKQLLSEK.

It belongs to the DEAD box helicase family. DDX46/PRP5 subfamily. As to quaternary structure, component of the 17S U2 SnRNP complex, a ribonucleoprotein complex that contains small nuclear RNA (snRNA) U2 and a number of specific proteins.

The protein localises to the nucleus speckle. The enzyme catalyses ATP + H2O = ADP + phosphate + H(+). Component of the 17S U2 SnRNP complex of the spliceosome, a large ribonucleoprotein complex that removes introns from transcribed pre-mRNAs. In Dictyostelium discoideum (Social amoeba), this protein is ATP-dependent RNA helicase ddx46 (helB1).